A 400-amino-acid chain; its full sequence is uncharacterized protein (400 aa).

This is an uncharacterized protein from Saccharomyces cerevisiae (strain ATCC 204508 / S288c) (Baker's yeast).